A 136-amino-acid chain; its full sequence is Protein NrdI (136 aa).

This sequence belongs to the NrdI family.

Its function is as follows. Probably involved in ribonucleotide reductase function. This chain is Protein NrdI, found in Klebsiella pneumoniae (strain 342).